We begin with the raw amino-acid sequence, 131 residues long: Small ribosomal subunit protein uS8 (131 aa).

This sequence belongs to the universal ribosomal protein uS8 family. Part of the 30S ribosomal subunit. Contacts proteins S5 and S12.

One of the primary rRNA binding proteins, it binds directly to 16S rRNA central domain where it helps coordinate assembly of the platform of the 30S subunit. This Campylobacter fetus subsp. fetus (strain 82-40) protein is Small ribosomal subunit protein uS8.